The primary structure comprises 93 residues: uncharacterized protein (93 aa).

2 helical membrane passes run 8–28 and 54–74; these read FIGI…LLAS and ACFL…YLIL.

Its subcellular location is the cell membrane. This is an uncharacterized protein from Methanocaldococcus jannaschii (strain ATCC 43067 / DSM 2661 / JAL-1 / JCM 10045 / NBRC 100440) (Methanococcus jannaschii).